Here is a 161-residue protein sequence, read N- to C-terminus: Allophycocyanin subunit alpha-B (161 aa).

Asparagine 71 carries the post-translational modification N4-methylasparagine. A (2R,3E)-phycocyanobilin-binding site is contributed by cysteine 81.

The protein belongs to the phycobiliprotein family. As to quaternary structure, heterohexamer of two alpha chains, one alpha-B chain and three beta chains. Post-translationally, contains one covalently linked phycocyanobilin chromophore. The chromophore is added by phycocyanobilin lyase CpcS 1.

The protein resides in the cellular thylakoid membrane. In terms of biological role, light-harvesting photosynthetic bile pigment-protein from the phycobiliprotein complex. Allophycocyanin has a maximum absorption at approximately 654 nanometers. The protein is Allophycocyanin subunit alpha-B (apcD) of Nostoc sp. (strain PCC 7120 / SAG 25.82 / UTEX 2576).